A 438-amino-acid polypeptide reads, in one-letter code: MTITKIHARSVYDSRGNPTVEVDIVTETGLHRAIVPSGASTGSHEACELRDGDKSKWGGKGVTKAVANVNDTIAPALIKEKLDVKDQSAVDAFLNKLDGTTNKTNLGANAILGVSMAIAKAAAAEKGVPLYAHISDLAGTKKPYVLPVPFQNVLNGGSHAGGRLAFQEFMIVPCEAPTFSEAMRQGAEVYQKLKALAKKTYGQSAGNVGDEGGVAPDIQTAEEALDLITKAIEEAGYTGKIKIAMDVASSEFYKADEKKYDLDFKNPDSDKSKWLTYEQLAEMYKSLAEKYPIVSIEDPFAEDDWEAWSYFFKTYDGQIVGDDLTVTNPEFIKKAIELKSCNALLLKVNQIGTITEAIQAAKDAFGAGWGVMVSHRSGETEDVTIADIVVGLRSGQIKTGAPARSERLAKLNQILRIEEELGDNAVYAGNNFRTAVNL.

Residues histidine 159 and glutamate 168 each coordinate substrate. Glutamate 211 functions as the Proton donor in the catalytic mechanism. Positions 246, 297, and 322 each coordinate Mg(2+). Substrate contacts are provided by glutamate 297 and aspartate 322. The active-site Proton acceptor is the lysine 347. Residues 374-377 (SHRS) and lysine 398 each bind substrate.

It belongs to the enolase family. As to quaternary structure, homodimer. Requires Mg(2+) as cofactor.

The protein resides in the cytoplasm. The enzyme catalyses (2R)-2-phosphoglycerate = phosphoenolpyruvate + H2O. The protein operates within carbohydrate degradation; glycolysis; pyruvate from D-glyceraldehyde 3-phosphate: step 4/5. This chain is Enolase (ENO), found in Alternaria alternata (Alternaria rot fungus).